Here is a 944-residue protein sequence, read N- to C-terminus: Isoleucine--tRNA ligase (944 aa).

The 'HIGH' region signature appears at 58-68; that stretch reads PYANGSIHIGH. Glu563 serves as a coordination point for L-isoleucyl-5'-AMP. A 'KMSKS' region motif is present at residues 604–608; that stretch reads KMSKS. Lys607 is an ATP binding site. Positions 907, 910, 927, and 930 each coordinate Zn(2+).

It belongs to the class-I aminoacyl-tRNA synthetase family. IleS type 1 subfamily. Monomer. Zn(2+) serves as cofactor.

The protein localises to the cytoplasm. It carries out the reaction tRNA(Ile) + L-isoleucine + ATP = L-isoleucyl-tRNA(Ile) + AMP + diphosphate. In terms of biological role, catalyzes the attachment of isoleucine to tRNA(Ile). As IleRS can inadvertently accommodate and process structurally similar amino acids such as valine, to avoid such errors it has two additional distinct tRNA(Ile)-dependent editing activities. One activity is designated as 'pretransfer' editing and involves the hydrolysis of activated Val-AMP. The other activity is designated 'posttransfer' editing and involves deacylation of mischarged Val-tRNA(Ile). This chain is Isoleucine--tRNA ligase, found in Salmonella choleraesuis (strain SC-B67).